The primary structure comprises 253 residues: Proteasome subunit alpha (253 aa).

Residues 232–242 are compositionally biased toward low complexity; the sequence is AAGASTAGEAG. Residues 232–253 form a disordered region; that stretch reads AAGASTAGEAGSAEDEGSDDEK. The span at 243-253 shows a compositional bias: acidic residues; the sequence is SAEDEGSDDEK.

The protein belongs to the peptidase T1A family. In terms of assembly, the 20S proteasome core is composed of 14 alpha and 14 beta subunits that assemble into four stacked heptameric rings, resulting in a barrel-shaped structure. The two inner rings, each composed of seven catalytic beta subunits, are sandwiched by two outer rings, each composed of seven alpha subunits. The catalytic chamber with the active sites is on the inside of the barrel. Has a gated structure, the ends of the cylinder being occluded by the N-termini of the alpha-subunits. Is capped by the proteasome-associated ATPase, ARC.

The protein resides in the cytoplasm. It participates in protein degradation; proteasomal Pup-dependent pathway. With respect to regulation, the formation of the proteasomal ATPase ARC-20S proteasome complex, likely via the docking of the C-termini of ARC into the intersubunit pockets in the alpha-rings, may trigger opening of the gate for substrate entry. Interconversion between the open-gate and close-gate conformations leads to a dynamic regulation of the 20S proteasome proteolysis activity. Its function is as follows. Component of the proteasome core, a large protease complex with broad specificity involved in protein degradation. This is Proteasome subunit alpha from Streptomyces avermitilis (strain ATCC 31267 / DSM 46492 / JCM 5070 / NBRC 14893 / NCIMB 12804 / NRRL 8165 / MA-4680).